The chain runs to 345 residues: Uroporphyrinogen decarboxylase (345 aa).

Substrate is bound by residues 30–34 (RQAGR), Asp79, Tyr154, Ser209, and His322.

It belongs to the uroporphyrinogen decarboxylase family. Homodimer.

It is found in the cytoplasm. The enzyme catalyses uroporphyrinogen III + 4 H(+) = coproporphyrinogen III + 4 CO2. It participates in porphyrin-containing compound metabolism; protoporphyrin-IX biosynthesis; coproporphyrinogen-III from 5-aminolevulinate: step 4/4. Functionally, catalyzes the decarboxylation of four acetate groups of uroporphyrinogen-III to yield coproporphyrinogen-III. The protein is Uroporphyrinogen decarboxylase of Nocardioides sp. (strain ATCC BAA-499 / JS614).